A 259-amino-acid chain; its full sequence is Glutamate racemase (259 aa).

Substrate contacts are provided by residues 7-8 and 39-40; these read DS and YG. The Proton donor/acceptor role is filled by cysteine 70. 71 to 72 is a substrate binding site; it reads NS. The Proton donor/acceptor role is filled by cysteine 180. 181 to 182 contributes to the substrate binding site; the sequence is TH.

It belongs to the aspartate/glutamate racemases family.

The enzyme catalyses L-glutamate = D-glutamate. The protein operates within cell wall biogenesis; peptidoglycan biosynthesis. Functionally, provides the (R)-glutamate required for cell wall biosynthesis. The sequence is that of Glutamate racemase from Hydrogenobaculum sp. (strain Y04AAS1).